Consider the following 69-residue polypeptide: Pleurain-A1 (69 aa).

A signal peptide spans 1-18 (MFTLKKTLLLLFFLGTIS). Positions 19-43 (ISLCKQERDADEDDGRKMTEEEVKR) are excised as a propeptide. A disulfide bond links cysteine 63 and cysteine 69.

Expressed by the skin glands.

Its subcellular location is the secreted. Its function is as follows. Antimicrobial peptide. Has activity against the Gram-positive bacterium S.aureus ATCC2592 (MIC=15 ug/ml), the Gram-negative bacteria E.coli ATCC25922 (MIC=60 ug/ml), B.dysenteriae (MIC=120 ug/ml), H.pylori NTCT11637 (MIC=30 ug/ml), and the fungus C.albicans ATCC2002 (MIC=30 ug/ml). Has little hemolytic activity on rabbit red blood cells. The polypeptide is Pleurain-A1 (Nidirana pleuraden (Yunnan pond frog)).